Here is a 74-residue protein sequence, read N- to C-terminus: Protein kish-B (74 aa).

An N-terminal signal peptide occupies residues 1 to 22 (MTNVYSLDGILVFGLLFVCTCA). Over 23-52 (YFKKVPRLKTWLLSEKKGVWGVFYKAAVIG) the chain is Extracellular. The chain crosses the membrane as a helical span at residues 53–73 (TRLHAAVAIACIVMAFYVLFI). Position 74 (Lys74) is a topological domain, cytoplasmic.

This sequence belongs to the KISH family.

The protein resides in the golgi apparatus membrane. Its function is as follows. Involved in the early part of the secretory pathway. This is Protein kish-B (TMEM167B) from Bos taurus (Bovine).